Reading from the N-terminus, the 84-residue chain is CDC42 small effector protein 2 (84 aa).

Residues C10 and C11 are each lipidated (S-palmitoyl cysteine). A CRIB domain is found at 29–42; it reads IGEPTNFVHTAHVG. Residues S43 and S52 each carry the phosphoserine modification.

It belongs to the CDC42SE/SPEC family. As to quaternary structure, interacts with CDC42 (in GTP-bound form). Interacts weakly with RAC1 and not at all with RHOA. In terms of tissue distribution, widely expressed. Expressed at higher level in T-lymphocytes. Highly expressed in CCRF-CEM T-lymphocytes, Jurkat T-lymphocytes, and Raji B-lymphocytes compared (at protein level).

It is found in the cytoplasm. The protein localises to the cytoskeleton. Its subcellular location is the cell membrane. The protein resides in the cell projection. It localises to the phagocytic cup. Probably involved in the organization of the actin cytoskeleton by acting downstream of CDC42, inducing actin filament assembly. Alters CDC42-induced cell shape changes. In activated T-cells, may play a role in CDC42-mediated F-actin accumulation at the immunological synapse. May play a role in early contractile events in phagocytosis in macrophages. In Homo sapiens (Human), this protein is CDC42 small effector protein 2 (CDC42SE2).